Reading from the N-terminus, the 331-residue chain is 6-phosphogluconolactonase (331 aa).

Lys-287 carries the post-translational modification N6-acetyllysine.

This sequence belongs to the cycloisomerase 2 family.

The enzyme catalyses 6-phospho-D-glucono-1,5-lactone + H2O = 6-phospho-D-gluconate + H(+). It functions in the pathway carbohydrate degradation; pentose phosphate pathway; D-ribulose 5-phosphate from D-glucose 6-phosphate (oxidative stage): step 2/3. Functionally, catalyzes the hydrolysis of 6-phosphogluconolactone to 6-phosphogluconate. This Escherichia coli O127:H6 (strain E2348/69 / EPEC) protein is 6-phosphogluconolactonase.